Here is a 353-residue protein sequence, read N- to C-terminus: Probable dual-specificity RNA methyltransferase RlmN (353 aa).

The active-site Proton acceptor is Glu-90. The Radical SAM core domain occupies 96-326 (YKHGNSICIS…VTTRREMGSD (231 aa)). A disulfide bridge connects residues Cys-103 and Cys-331. [4Fe-4S] cluster is bound by residues Cys-110, Cys-114, and Cys-117. Residues 157-158 (GE), Ser-189, 212-214 (SLH), and Asn-288 each bind S-adenosyl-L-methionine. Catalysis depends on Cys-331, which acts as the S-methylcysteine intermediate.

The protein belongs to the radical SAM superfamily. RlmN family. [4Fe-4S] cluster is required as a cofactor.

It is found in the cytoplasm. It catalyses the reaction adenosine(2503) in 23S rRNA + 2 reduced [2Fe-2S]-[ferredoxin] + 2 S-adenosyl-L-methionine = 2-methyladenosine(2503) in 23S rRNA + 5'-deoxyadenosine + L-methionine + 2 oxidized [2Fe-2S]-[ferredoxin] + S-adenosyl-L-homocysteine. It carries out the reaction adenosine(37) in tRNA + 2 reduced [2Fe-2S]-[ferredoxin] + 2 S-adenosyl-L-methionine = 2-methyladenosine(37) in tRNA + 5'-deoxyadenosine + L-methionine + 2 oxidized [2Fe-2S]-[ferredoxin] + S-adenosyl-L-homocysteine. In terms of biological role, specifically methylates position 2 of adenine 2503 in 23S rRNA and position 2 of adenine 37 in tRNAs. The protein is Probable dual-specificity RNA methyltransferase RlmN of Clostridium beijerinckii (strain ATCC 51743 / NCIMB 8052) (Clostridium acetobutylicum).